Consider the following 701-residue polypeptide: Elongation factor G (701 aa).

The tr-type G domain occupies 6–286; the sequence is KFTRNIGIAA…YVMELLPSPL (281 aa). GTP contacts are provided by residues 15-22, 83-87, and 137-140; these read AHIDAGKT, DTPGH, and NKMD.

It belongs to the TRAFAC class translation factor GTPase superfamily. Classic translation factor GTPase family. EF-G/EF-2 subfamily.

It is found in the cytoplasm. Catalyzes the GTP-dependent ribosomal translocation step during translation elongation. During this step, the ribosome changes from the pre-translocational (PRE) to the post-translocational (POST) state as the newly formed A-site-bound peptidyl-tRNA and P-site-bound deacylated tRNA move to the P and E sites, respectively. Catalyzes the coordinated movement of the two tRNA molecules, the mRNA and conformational changes in the ribosome. The chain is Elongation factor G from Cytophaga hutchinsonii (strain ATCC 33406 / DSM 1761 / CIP 103989 / NBRC 15051 / NCIMB 9469 / D465).